We begin with the raw amino-acid sequence, 169 residues long: 4-hydroxylaminobenzoate lyase (169 aa).

This sequence belongs to the PnbB family.

It catalyses the reaction 4-hydroxylaminobenzoate + H2O + H(+) = 3,4-dihydroxybenzoate + NH4(+). Functionally, lyase involved in the degradation of nitroaromatic compounds. Catalyzes the conversion of 4-hydroxylaminobenzoate to 3,4-dihydroxybenzoate (protocatechuate). The sequence is that of 4-hydroxylaminobenzoate lyase from Nocardioides sp. (strain LMS-CY).